A 75-amino-acid chain; its full sequence is Protein BRICK1 (75 aa).

At Ala2 the chain carries N-acetylalanine. A coiled-coil region spans residues 41-72; it reads MSCRSRLATLNEKLTALERRIEYIEARVTKGE.

The protein belongs to the BRK1 family. Homotrimer when in free form. Directly interacts with WASF2. Component of the WAVE1 complex composed of ABI2, CYFIP1 or CYFIP2, BRK1, NCKAP1 and WASF1/WAVE1. Within the complex, a heterodimer containing NCKAP1 and CYFIP1 interacts with a heterotrimer formed by WAVE1, ABI2 and BRK1.

It is found in the cytoplasm. It localises to the cytoskeleton. In terms of biological role, involved in regulation of actin and microtubule organization. Part of a WAVE complex that activates the Arp2/3 complex. As component of the WAVE1 complex, required for BDNF-NTRK2 endocytic trafficking and signaling from early endosomes. In Homo sapiens (Human), this protein is Protein BRICK1 (BRK1).